A 305-amino-acid chain; its full sequence is ADP,ATP carrier protein (305 aa).

3 Solcar repeats span residues 8-101 (SNFA…IKAM), 112-204 (KWFA…LKPL), and 212-298 (NSFL…LQVI). 5 helical membrane passes run 10–37 (FAID…VKLL), 78–102 (TANV…KAMF), 110–130 (YAKW…LSLL), 180–201 (FLPS…YDSL), and 215–235 (LASF…SYPL). Residues R83 and K95 each contribute to the ADP site. Residue R239 coordinates ADP. The tract at residues 239-244 (RRRMMM) is important for transport activity. The Nucleotide carrier signature motif signature appears at 239–244 (RRRMMM). Residues 275–295 (CGANILRGVAGAGVISMYDQL) traverse the membrane as a helical segment.

The protein belongs to the mitochondrial carrier (TC 2.A.29) family. In terms of assembly, monomer.

It localises to the mitochondrion inner membrane. The catalysed reaction is ADP(in) + ATP(out) = ADP(out) + ATP(in). The matrix-open state (m-state) is inhibited by the membrane-permeable bongkrekic acid (BKA). The cytoplasmic-open state (c-state) is inhibited by the membrane-impermeable toxic inhibitor carboxyatractyloside (CATR). Functionally, ADP:ATP antiporter that mediates import of ADP into the mitochondrial matrix for ATP synthesis, and export of ATP out to fuel the cell. Cycles between the cytoplasmic-open state (c-state) and the matrix-open state (m-state): operates by the alternating access mechanism with a single substrate-binding site intermittently exposed to either the cytosolic (c-state) or matrix (m-state) side of the inner mitochondrial membrane. The polypeptide is ADP,ATP carrier protein (AAC) (Kluyveromyces lactis (strain ATCC 8585 / CBS 2359 / DSM 70799 / NBRC 1267 / NRRL Y-1140 / WM37) (Yeast)).